The following is a 257-amino-acid chain: 14-3-3-like protein GF14-G (257 aa).

It belongs to the 14-3-3 family.

In terms of biological role, is associated with a DNA binding complex that binds to the G box, a well-characterized cis-acting DNA regulatory element found in plant genes. In Oryza sativa subsp. japonica (Rice), this protein is 14-3-3-like protein GF14-G (GF14G).